The sequence spans 252 residues: Deoxyuridine 5'-triphosphate nucleotidohydrolase, mitochondrial (252 aa).

The transit peptide at 1–69 directs the protein to the mitochondrion; the sequence is MTPLCPRPAL…AGRLSQGCRG (69 aa). C11, S88, and S99 each carry phosphoserine. Residues 78-104 form a disordered region; the sequence is WKGELPKAGGSPAPGPETPAISPSKRA. DUTP is bound by residues 173–175, 187–193, G198, R241, and 246–247; these read RSG, GVIDEDY, and FG.

This sequence belongs to the dUTPase family. In terms of assembly, homotrimer. Mg(2+) is required as a cofactor. In terms of processing, nuclear isoform 2 is phosphorylated in vivo on Ser-11, a reaction that can be catalyzed in vitro by CDC2. Phosphorylation in mature T-cells occurs in a cell cycle-dependent manner. Isoform 3 is not phosphorylated. In terms of tissue distribution, found in a variety of tissues. Isoform 3 expression is constitutive, while isoform 2 expression correlates with the onset of DNA replication (at protein level). Isoform 2 degradation coincides with the cessation of nuclear DNA replication (at protein level).

The protein localises to the nucleus. The protein resides in the mitochondrion. The enzyme catalyses dUTP + H2O = dUMP + diphosphate + H(+). The protein operates within pyrimidine metabolism; dUMP biosynthesis; dUMP from dCTP (dUTP route): step 2/2. Phosphorylation is necessary for activity. Catalyzes the cleavage of 2'-deoxyuridine 5'-triphosphate (dUTP) into 2'-deoxyuridine 5'-monophosphate (dUMP) and inorganic pyrophosphate and through its action efficiently prevents uracil misincorporation into DNA and at the same time provides dUMP, the substrate for de novo thymidylate biosynthesis. Inhibits peroxisome proliferator-activated receptor (PPAR) activity by binding of its N-terminal to PPAR, preventing the latter's dimerization with retinoid X receptor. Essential for embryonic development. This chain is Deoxyuridine 5'-triphosphate nucleotidohydrolase, mitochondrial (DUT), found in Homo sapiens (Human).